The primary structure comprises 328 residues: Mitochondrial GTPase 1 (328 aa).

The CP-type G domain maps to 10 to 199; that stretch reads KTTLKRLRDS…MVDTPGIMLP (190 aa). GTP-binding positions include 57–60, 143–148, and G195; these read NKCD and NVGKSS.

Belongs to the TRAFAC class YlqF/YawG GTPase family. MTG1 subfamily.

Its subcellular location is the mitochondrion inner membrane. In terms of biological role, mitochondrial GTPase involved in assembly of the large ribosomal subunit. Plays a role in expression of the mitochondrial translational machinery. The protein is Mitochondrial GTPase 1 of Schizosaccharomyces japonicus (strain yFS275 / FY16936) (Fission yeast).